We begin with the raw amino-acid sequence, 1186 residues long: Pesticidal crystal protein Cry14Aa (1186 aa).

The protein belongs to the delta endotoxin family.

Its function is as follows. Promotes colloidosmotic lysis by binding to the midgut epithelial cells of insects. The protein is Pesticidal crystal protein Cry14Aa (cry14Aa) of Bacillus thuringiensis subsp. sotto.